The sequence spans 403 residues: Acetyl-CoA acetyltransferase IB (403 aa).

Catalysis depends on C91, which acts as the Acyl-thioester intermediate. Residues H353 and C383 each act as proton acceptor in the active site. Residues 401–403 (AKL) carry the Microbody targeting signal motif.

Belongs to the thiolase-like superfamily. Thiolase family. In terms of assembly, multimeric.

The protein localises to the peroxisome. The catalysed reaction is 2 acetyl-CoA = acetoacetyl-CoA + CoA. Its pathway is metabolic intermediate biosynthesis; (R)-mevalonate biosynthesis; (R)-mevalonate from acetyl-CoA: step 1/3. In Candida tropicalis (Yeast), this protein is Acetyl-CoA acetyltransferase IB (PACTB).